A 767-amino-acid polypeptide reads, in one-letter code: Phosphoribosylformylglycinamidine synthase subunit PurL (767 aa).

Residue His46 is part of the active site. Residues Tyr49 and Lys88 each contribute to the ATP site. Glu90 serves as a coordination point for Mg(2+). Substrate-binding positions include 91–94 (SHNH) and Arg113. Residue His92 is the Proton acceptor of the active site. Asp114 provides a ligand contact to Mg(2+). A substrate-binding site is contributed by Gln237. Residue Asp265 coordinates Mg(2+). Residue 309–311 (ESQ) participates in substrate binding. The ATP site is built by Asp498 and Gly535. Residue Asn536 participates in Mg(2+) binding. A substrate-binding site is contributed by Ser538.

This sequence belongs to the FGAMS family. In terms of assembly, monomer. Part of the FGAM synthase complex composed of 1 PurL, 1 PurQ and 2 PurS subunits.

It localises to the cytoplasm. The enzyme catalyses N(2)-formyl-N(1)-(5-phospho-beta-D-ribosyl)glycinamide + L-glutamine + ATP + H2O = 2-formamido-N(1)-(5-O-phospho-beta-D-ribosyl)acetamidine + L-glutamate + ADP + phosphate + H(+). The protein operates within purine metabolism; IMP biosynthesis via de novo pathway; 5-amino-1-(5-phospho-D-ribosyl)imidazole from N(2)-formyl-N(1)-(5-phospho-D-ribosyl)glycinamide: step 1/2. Its function is as follows. Part of the phosphoribosylformylglycinamidine synthase complex involved in the purines biosynthetic pathway. Catalyzes the ATP-dependent conversion of formylglycinamide ribonucleotide (FGAR) and glutamine to yield formylglycinamidine ribonucleotide (FGAM) and glutamate. The FGAM synthase complex is composed of three subunits. PurQ produces an ammonia molecule by converting glutamine to glutamate. PurL transfers the ammonia molecule to FGAR to form FGAM in an ATP-dependent manner. PurS interacts with PurQ and PurL and is thought to assist in the transfer of the ammonia molecule from PurQ to PurL. This chain is Phosphoribosylformylglycinamidine synthase subunit PurL, found in Anaeromyxobacter sp. (strain Fw109-5).